The chain runs to 324 residues: uncharacterized protein (324 aa).

Helical transmembrane passes span 4–24, 63–83, 106–128, 132–151, 179–199, 209–229, 246–266, and 282–302; these read GNKVVISWIVSIGFVGMPEFM, AALLLEYGWVLLVLIGLEGIL, ALFYGLAGAFVLRFGSLFAISFL, WQVQAIGAIYLLYISASHLL, LADIAFAVDSILAAVALAVTL, GLDGGQFLVILAGGIIGLVIM, LETAAFVIVGWVGVKLALYTL, and GTWKLIFWGVLAAIAVCGWFM.

Belongs to the TerC family.

The protein localises to the cell membrane. This is an uncharacterized protein from Bacillus subtilis (strain 168).